The sequence spans 294 residues: MKKPFNVIAIIGKPRDQQAIQTHRDLYHWLSSLGYQVFIDDRLSAILNDVPEEHFSGLVELGEKADLAIVVGGDGNMLGAARILSRFNTRVIGVNRGNLGFLTDLNPEDFQHSLEAVLDGAYIEEERFLLEAEIHRHGQVKSHNAALNEAVLHPGQVAHMIEFEVYIDESFAFSLRADGLIVSTPTGSTAYSLSGGGPILSPSLNAISLVPMFPHTLSSRPLVVDGNRRIKLLVSPDNRGTQEVSCDGQVSLPVSPGDEIHIYQSPNRLRLIHPKDYSYYHVLRNKLGWSSKLF.

Asp-74 serves as the catalytic Proton acceptor. NAD(+) contacts are provided by residues 74–75 (DG), 148–149 (NE), His-159, Arg-176, Asp-178, 189–194 (TAYSLS), and Gln-249.

The protein belongs to the NAD kinase family. The cofactor is a divalent metal cation.

The protein resides in the cytoplasm. The enzyme catalyses NAD(+) + ATP = ADP + NADP(+) + H(+). Functionally, involved in the regulation of the intracellular balance of NAD and NADP, and is a key enzyme in the biosynthesis of NADP. Catalyzes specifically the phosphorylation on 2'-hydroxyl of the adenosine moiety of NAD to yield NADP. This Vibrio vulnificus (strain CMCP6) protein is NAD kinase.